The following is a 121-amino-acid chain: Large ribosomal subunit protein eL18 (121 aa).

The protein belongs to the eukaryotic ribosomal protein eL18 family.

This Methanothermobacter thermautotrophicus (strain ATCC 29096 / DSM 1053 / JCM 10044 / NBRC 100330 / Delta H) (Methanobacterium thermoautotrophicum) protein is Large ribosomal subunit protein eL18.